We begin with the raw amino-acid sequence, 71 residues long: Small ribosomal subunit protein bS21 (71 aa).

This sequence belongs to the bacterial ribosomal protein bS21 family.

The polypeptide is Small ribosomal subunit protein bS21 (Shewanella piezotolerans (strain WP3 / JCM 13877)).